Reading from the N-terminus, the 352-residue chain is UDP-N-acetylglucosamine--N-acetylmuramyl-(pentapeptide) pyrophosphoryl-undecaprenol N-acetylglucosamine transferase (352 aa).

UDP-N-acetyl-alpha-D-glucosamine is bound by residues 11-13, N120, R161, S188, and Q286; that span reads TGG.

The protein belongs to the glycosyltransferase 28 family. MurG subfamily.

It is found in the cell inner membrane. It catalyses the reaction di-trans,octa-cis-undecaprenyl diphospho-N-acetyl-alpha-D-muramoyl-L-alanyl-D-glutamyl-meso-2,6-diaminopimeloyl-D-alanyl-D-alanine + UDP-N-acetyl-alpha-D-glucosamine = di-trans,octa-cis-undecaprenyl diphospho-[N-acetyl-alpha-D-glucosaminyl-(1-&gt;4)]-N-acetyl-alpha-D-muramoyl-L-alanyl-D-glutamyl-meso-2,6-diaminopimeloyl-D-alanyl-D-alanine + UDP + H(+). The protein operates within cell wall biogenesis; peptidoglycan biosynthesis. Its function is as follows. Cell wall formation. Catalyzes the transfer of a GlcNAc subunit on undecaprenyl-pyrophosphoryl-MurNAc-pentapeptide (lipid intermediate I) to form undecaprenyl-pyrophosphoryl-MurNAc-(pentapeptide)GlcNAc (lipid intermediate II). In Prochlorococcus marinus (strain NATL1A), this protein is UDP-N-acetylglucosamine--N-acetylmuramyl-(pentapeptide) pyrophosphoryl-undecaprenol N-acetylglucosamine transferase.